Here is a 333-residue protein sequence, read N- to C-terminus: Phosphate acyltransferase (333 aa).

The protein belongs to the PlsX family. In terms of assembly, homodimer. Probably interacts with PlsY.

The protein resides in the cytoplasm. The enzyme catalyses a fatty acyl-[ACP] + phosphate = an acyl phosphate + holo-[ACP]. The protein operates within lipid metabolism; phospholipid metabolism. Functionally, catalyzes the reversible formation of acyl-phosphate (acyl-PO(4)) from acyl-[acyl-carrier-protein] (acyl-ACP). This enzyme utilizes acyl-ACP as fatty acyl donor, but not acyl-CoA. This is Phosphate acyltransferase from Clostridium beijerinckii (strain ATCC 51743 / NCIMB 8052) (Clostridium acetobutylicum).